A 214-amino-acid polypeptide reads, in one-letter code: LexA repressor (214 aa).

The segment at residues 26–46 (VREIGEAVGLSSSSTVHSYLK) is a DNA-binding region (H-T-H motif). Catalysis depends on for autocatalytic cleavage activity residues S138 and K175.

Belongs to the peptidase S24 family. As to quaternary structure, homodimer.

It carries out the reaction Hydrolysis of Ala-|-Gly bond in repressor LexA.. In terms of biological role, represses a number of genes involved in the response to DNA damage (SOS response), including recA and lexA. In the presence of single-stranded DNA, RecA interacts with LexA causing an autocatalytic cleavage which disrupts the DNA-binding part of LexA, leading to derepression of the SOS regulon and eventually DNA repair. The sequence is that of LexA repressor from Desulforamulus reducens (strain ATCC BAA-1160 / DSM 100696 / MI-1) (Desulfotomaculum reducens).